The chain runs to 896 residues: MEKAKLTKNLKLKIKNAQLTKAAGLDKLKQKLAQAGSSDTKNSPASKAQTKEKSSKKTAGTPAPAPEVDLGATESTARRIRAKDRSSFAAEPTVTTALPGDASHLTLDAIPAIKAPEITSVTQKEQTLRECTDTSSVQQEEKKESSEETSPETPERIEETPIIRTRTEPKSVVSIKPKFGPTGKHINHLLAKTFKAPAKETKAASTEETTQQQPRQNDAASHNNKQQPSGTSSRPASSAPSYRRESTSNNNNNAKRGSERDRSKRSDESVKAFTGRDRYGLNEGSSEEDKWRKKRVHKTKKQAEEHVVQCPAHIKIALPITVKDLAAEMKLKASELIQKLFIHGMTYVVNDVLDSQTVVEYIGLEFGCTIEIDSSAKEKLCLVENTVRDEVNATDPEKLIIRSPIVAFMGHVDHGKTTIIDALRQSNMAASEAGAITQHTGAFKCTTPVGEITVLDTPGHEAFSAMRARGAEVCDIVVLVVAGDEGIKEQTIEAIEHAKGANITIVVAINKCDKPNFNVETVYRQLAELDLLPEAWGGSIATINTSAKTGEGLQDLLEMLALQAEVLELKADPSARARGLVIESELHKGLGAVATVLVQNGTLHLGEALVFNDCYGKVKTMHDEHNQLLQSATPSTPVLITGLSAIPKAGDPFIVVKNEKVAKEIISARLAGQQRSAALQKKRPNFDAVLQNKKTLKLIIKADVQGSIEALAHSILNIRSEKVDVEILSSGVGDISESDIRLASASKATVIGFHTSVESHAEPLIKNLNVKVCLFDIIYHAVDAIKEIMTGLLDPIAEEKNLGAAEIKATFKSSQLGTIYGCLVTEGTVVRNQKIRIIRDKEVLWKGSLSSLKRLKEDVKEVKKGMECGILLDNYQQAQVGDILQCYEVIYHPQTL.

2 disordered regions span residues 32 to 99 (LAQA…TALP) and 117 to 304 (EITS…KQAE). Residues 35-48 (AGSSDTKNSPASKA) show a composition bias toward polar residues. Over residues 153–169 (TPERIEETPIIRTRTEP) the composition is skewed to basic and acidic residues. The span at 203 to 214 (AASTEETTQQQP) shows a compositional bias: low complexity. The span at 215–227 (RQNDAASHNNKQQ) shows a compositional bias: polar residues. Positions 228–241 (PSGTSSRPASSAPS) are enriched in low complexity. The span at 256–280 (RGSERDRSKRSDESVKAFTGRDRYG) shows a compositional bias: basic and acidic residues. Residues 401–570 (IRSPIVAFMG…ALQAEVLELK (170 aa)) form the tr-type G domain. Residues 410-417 (GHVDHGKT) are G1. 410-417 (GHVDHGKT) serves as a coordination point for GTP. The interval 435 to 439 (AITQH) is G2. The interval 456-459 (DTPG) is G3. GTP contacts are provided by residues 456-460 (DTPGH) and 510-513 (NKCD). The tract at residues 510–513 (NKCD) is G4. The G5 stretch occupies residues 546 to 548 (SAK).

This sequence belongs to the TRAFAC class translation factor GTPase superfamily. Classic translation factor GTPase family. IF-2 subfamily.

The protein localises to the cytoplasm. Its function is as follows. One of the essential components for the initiation of protein synthesis. Protects formylmethionyl-tRNA from spontaneous hydrolysis and promotes its binding to the 30S ribosomal subunits. Also involved in the hydrolysis of GTP during the formation of the 70S ribosomal complex. This is Translation initiation factor IF-2 from Chlamydia trachomatis serovar L2 (strain ATCC VR-902B / DSM 19102 / 434/Bu).